A 61-amino-acid chain; its full sequence is Small ribosomal subunit protein uS14 (61 aa).

Residues cysteine 24, cysteine 27, cysteine 40, and cysteine 43 each coordinate Zn(2+).

Belongs to the universal ribosomal protein uS14 family. Zinc-binding uS14 subfamily. As to quaternary structure, part of the 30S ribosomal subunit. Contacts proteins S3 and S10. Zn(2+) is required as a cofactor.

In terms of biological role, binds 16S rRNA, required for the assembly of 30S particles and may also be responsible for determining the conformation of the 16S rRNA at the A site. The sequence is that of Small ribosomal subunit protein uS14 from Nautilia profundicola (strain ATCC BAA-1463 / DSM 18972 / AmH).